The primary structure comprises 466 residues: tRNA-2-methylthio-N(6)-dimethylallyladenosine synthase (466 aa).

Positions 2–118 (KRFYIHTIGC…LPGHIQAVAH (117 aa)) constitute an MTTase N-terminal domain. The [4Fe-4S] cluster site is built by C11, C47, C81, C157, C161, and C164. Residues 143 to 372 (DSSGVTGFIT…LELQNRITAE (230 aa)) form the Radical SAM core domain. One can recognise a TRAM domain in the interval 375 to 453 (RALEGRVEQV…AHSLSGIAVG (79 aa)).

The protein belongs to the methylthiotransferase family. MiaB subfamily. As to quaternary structure, monomer. It depends on [4Fe-4S] cluster as a cofactor.

It is found in the cytoplasm. It catalyses the reaction N(6)-dimethylallyladenosine(37) in tRNA + (sulfur carrier)-SH + AH2 + 2 S-adenosyl-L-methionine = 2-methylsulfanyl-N(6)-dimethylallyladenosine(37) in tRNA + (sulfur carrier)-H + 5'-deoxyadenosine + L-methionine + A + S-adenosyl-L-homocysteine + 2 H(+). In terms of biological role, catalyzes the methylthiolation of N6-(dimethylallyl)adenosine (i(6)A), leading to the formation of 2-methylthio-N6-(dimethylallyl)adenosine (ms(2)i(6)A) at position 37 in tRNAs that read codons beginning with uridine. The protein is tRNA-2-methylthio-N(6)-dimethylallyladenosine synthase of Desulfosudis oleivorans (strain DSM 6200 / JCM 39069 / Hxd3) (Desulfococcus oleovorans).